The following is a 246-amino-acid chain: Small ribosomal subunit protein uS2 (246 aa).

It belongs to the universal ribosomal protein uS2 family.

This chain is Small ribosomal subunit protein uS2, found in Dictyoglomus thermophilum (strain ATCC 35947 / DSM 3960 / H-6-12).